The chain runs to 408 residues: Na(+)/H(+) antiporter NhaA (408 aa).

12 consecutive transmembrane segments (helical) span residues 42 to 62 (LMFV…PVYF), 69 to 89 (VLGL…FFLL), 110 to 130 (ALPG…FIAV), 140 to 160 (GWAI…SLLG), 169 to 189 (IFLT…IALF), 192 to 212 (AELT…LAAL), 215 to 235 (FGVK…FFVL), 238 to 258 (GIHA…QAST), 277 to 297 (VAFL…FAGL), 312 to 332 (LGLF…AIWL), 346 to 366 (LYGV…IGLL), and 380 to 400 (IGVL…LRVT).

The protein belongs to the NhaA Na(+)/H(+) (TC 2.A.33) antiporter family.

It is found in the cell inner membrane. The catalysed reaction is Na(+)(in) + 2 H(+)(out) = Na(+)(out) + 2 H(+)(in). Functionally, na(+)/H(+) antiporter that extrudes sodium in exchange for external protons. This chain is Na(+)/H(+) antiporter NhaA, found in Nitrobacter hamburgensis (strain DSM 10229 / NCIMB 13809 / X14).